We begin with the raw amino-acid sequence, 525 residues long: Squalene epoxidase 3 (525 aa).

Residues 9–29 (HCILTTTFVASLFAFLLLYVL) form a helical membrane-spanning segment. FAD contacts are provided by residues 64-65 (VA), 84-85 (ER), Arg-92, Arg-163, Val-179, Asp-341, and Met-354. A run of 2 helical transmembrane segments spans residues 452–472 (LVLHFFAVAIFGVGRLLVPLP) and 477–497 (LWLGARLISSASGIIFPIIKA).

The protein belongs to the squalene monooxygenase family. The cofactor is FAD. Expressed in seedlings, leaves, stems, inflorescences and siliques.

Its subcellular location is the membrane. The enzyme catalyses squalene + reduced [NADPH--hemoprotein reductase] + O2 = (S)-2,3-epoxysqualene + oxidized [NADPH--hemoprotein reductase] + H2O + H(+). The protein operates within terpene metabolism; lanosterol biosynthesis; lanosterol from farnesyl diphosphate: step 2/3. Its function is as follows. Catalyzes the stereospecific oxidation of squalene to (S)-2,3-epoxysqualene, and is considered to be a rate-limiting enzyme in steroid biosynthesis. Can produce not only oxidosqualene, but also 2,3:22,23-dioxidosqualene. This chain is Squalene epoxidase 3 (SQE3), found in Arabidopsis thaliana (Mouse-ear cress).